Consider the following 212-residue polypeptide: Large ribosomal subunit protein bL25 (212 aa).

Positions 1 to 16 are enriched in basic and acidic residues; the sequence is MKTRIDLTVEPRETGK. The segment at 1-22 is disordered; the sequence is MKTRIDLTVEPRETGKHNSRGL.

This sequence belongs to the bacterial ribosomal protein bL25 family. CTC subfamily. Part of the 50S ribosomal subunit; part of the 5S rRNA/L5/L18/L25 subcomplex. Contacts the 5S rRNA. Binds to the 5S rRNA independently of L5 and L18.

Its function is as follows. This is one of the proteins that binds to the 5S RNA in the ribosome where it forms part of the central protuberance. The polypeptide is Large ribosomal subunit protein bL25 (Bdellovibrio bacteriovorus (strain ATCC 15356 / DSM 50701 / NCIMB 9529 / HD100)).